We begin with the raw amino-acid sequence, 227 residues long: Cytochrome c oxidase subunit 2 (227 aa).

Over 1-14 (MAHPFQTGLQDATS) the chain is Mitochondrial intermembrane. Residues 15–45 (PIMEELLHFHDHTLMIVFLISSLVLYIISIM) form a helical membrane-spanning segment. The Mitochondrial matrix portion of the chain corresponds to 46–59 (LTTKLTHTNTMDAQ). Residues 60–87 (EVETVWTILPAIILIMIALPSLRILYMM) traverse the membrane as a helical segment. Residues 88 to 227 (DEINNPSLTV…YFEKWSASML (140 aa)) are Mitochondrial intermembrane-facing. The Cu cation site is built by H161, C196, E198, C200, H204, and M207. E198 serves as a coordination point for Mg(2+). The residue at position 218 (Y218) is a Phosphotyrosine.

It belongs to the cytochrome c oxidase subunit 2 family. Component of the cytochrome c oxidase (complex IV, CIV), a multisubunit enzyme composed of 14 subunits. The complex is composed of a catalytic core of 3 subunits MT-CO1, MT-CO2 and MT-CO3, encoded in the mitochondrial DNA, and 11 supernumerary subunits COX4I, COX5A, COX5B, COX6A, COX6B, COX6C, COX7A, COX7B, COX7C, COX8 and NDUFA4, which are encoded in the nuclear genome. The complex exists as a monomer or a dimer and forms supercomplexes (SCs) in the inner mitochondrial membrane with NADH-ubiquinone oxidoreductase (complex I, CI) and ubiquinol-cytochrome c oxidoreductase (cytochrome b-c1 complex, complex III, CIII), resulting in different assemblies (supercomplex SCI(1)III(2)IV(1) and megacomplex MCI(2)III(2)IV(2)). Found in a complex with TMEM177, COA6, COX18, COX20, SCO1 and SCO2. Interacts with TMEM177 in a COX20-dependent manner. Interacts with COX20. Interacts with COX16. Cu cation serves as cofactor.

The protein localises to the mitochondrion inner membrane. The catalysed reaction is 4 Fe(II)-[cytochrome c] + O2 + 8 H(+)(in) = 4 Fe(III)-[cytochrome c] + 2 H2O + 4 H(+)(out). Its function is as follows. Component of the cytochrome c oxidase, the last enzyme in the mitochondrial electron transport chain which drives oxidative phosphorylation. The respiratory chain contains 3 multisubunit complexes succinate dehydrogenase (complex II, CII), ubiquinol-cytochrome c oxidoreductase (cytochrome b-c1 complex, complex III, CIII) and cytochrome c oxidase (complex IV, CIV), that cooperate to transfer electrons derived from NADH and succinate to molecular oxygen, creating an electrochemical gradient over the inner membrane that drives transmembrane transport and the ATP synthase. Cytochrome c oxidase is the component of the respiratory chain that catalyzes the reduction of oxygen to water. Electrons originating from reduced cytochrome c in the intermembrane space (IMS) are transferred via the dinuclear copper A center (CU(A)) of subunit 2 and heme A of subunit 1 to the active site in subunit 1, a binuclear center (BNC) formed by heme A3 and copper B (CU(B)). The BNC reduces molecular oxygen to 2 water molecules using 4 electrons from cytochrome c in the IMS and 4 protons from the mitochondrial matrix. This chain is Cytochrome c oxidase subunit 2 (MT-CO2), found in Ailuropoda melanoleuca (Giant panda).